The chain runs to 561 residues: Tetracenomycin A2 monooxygenase-dioxygenase (561 aa).

Leu-15, Glu-35, Gln-128, and Met-152 together coordinate FAD. Residue Tyr-231 is the Proton acceptor of the active site. Residue Asp-322 participates in FAD binding.

It belongs to the PheA/TfdB FAD monooxygenase family. Monomer. May form oligomers up to homohexamers. FAD is required as a cofactor.

The catalysed reaction is tetracenomycin A2 + 2 NADPH + 2 O2 + 2 H(+) = tetracenomycin C + 2 NADP(+) + H2O. It participates in antibiotic biosynthesis; tetracenomycin C biosynthesis. Functionally, involved in the biosynthesis of tetracenomycin C (TCM C). Catalyzes the triple hydroxylation of tetracenomycin A2 (TCM A2) at positions C-4, C-4a and C-12a to give tetracenomycin C (TCM C). Can use either NADH or NADPH as electron donors, but prefers NADPH under physiological conditions. This Streptomyces glaucescens protein is Tetracenomycin A2 monooxygenase-dioxygenase.